The primary structure comprises 202 residues: Thymidylate kinase (202 aa).

7 to 14 is an ATP binding site; it reads GIDGSGKT.

It belongs to the thymidylate kinase family.

The catalysed reaction is dTMP + ATP = dTDP + ADP. Functionally, phosphorylation of dTMP to form dTDP in both de novo and salvage pathways of dTTP synthesis. In Ehrlichia chaffeensis (strain ATCC CRL-10679 / Arkansas), this protein is Thymidylate kinase.